Here is an 88-residue protein sequence, read N- to C-terminus: Small ribosomal subunit protein bS18 (88 aa).

Positions 1-22 are disordered; it reads MSTKNAKPKKEAQRRPSRKAKV.

The protein belongs to the bacterial ribosomal protein bS18 family. As to quaternary structure, part of the 30S ribosomal subunit. Forms a tight heterodimer with protein bS6.

Binds as a heterodimer with protein bS6 to the central domain of the 16S rRNA, where it helps stabilize the platform of the 30S subunit. In Thermus thermophilus, this protein is Small ribosomal subunit protein bS18 (rpsR).